Reading from the N-terminus, the 290-residue chain is Light-independent protochlorophyllide reductase iron-sulfur ATP-binding protein (290 aa).

ATP-binding positions include 34–39 and Lys-63; that span reads GIGKST. Ser-38 contributes to the Mg(2+) binding site. [4Fe-4S] cluster is bound by residues Cys-119 and Cys-153. ATP contacts are provided by residues 204–205 and 228–230; these read NR and PDL.

This sequence belongs to the NifH/BchL/ChlL family. As to quaternary structure, homodimer. Protochlorophyllide reductase is composed of three subunits; BchL, BchN and BchB. Requires [4Fe-4S] cluster as cofactor.

It carries out the reaction chlorophyllide a + oxidized 2[4Fe-4S]-[ferredoxin] + 2 ADP + 2 phosphate = protochlorophyllide a + reduced 2[4Fe-4S]-[ferredoxin] + 2 ATP + 2 H2O. It functions in the pathway porphyrin-containing compound metabolism; bacteriochlorophyll biosynthesis (light-independent). In terms of biological role, component of the dark-operative protochlorophyllide reductase (DPOR) that uses Mg-ATP and reduced ferredoxin to reduce ring D of protochlorophyllide (Pchlide) to form chlorophyllide a (Chlide). This reaction is light-independent. The L component serves as a unique electron donor to the NB-component of the complex, and binds Mg-ATP. The sequence is that of Light-independent protochlorophyllide reductase iron-sulfur ATP-binding protein from Rhodospirillum rubrum.